The sequence spans 44 residues: Photosystem I reaction center subunit IX (44 aa).

A helical membrane pass occupies residues 7-27; the sequence is YLSTAPVLAILCVSFLAALLI.

The protein belongs to the PsaJ family.

The protein resides in the plastid. The protein localises to the chloroplast thylakoid membrane. May help in the organization of the PsaE and PsaF subunits. This chain is Photosystem I reaction center subunit IX, found in Pinus thunbergii (Japanese black pine).